Here is an 821-residue protein sequence, read N- to C-terminus: Maternal DNA replication licensing factor mcm6 (821 aa).

A C4-type zinc finger spans residues 159–186; sequence CMDCQSVVKDVEQQFRYTQPTICKNPVC. An MCM domain is found at 347 to 554; it reads LYHNLCTSLF…TDYAIARRIV (208 aa). 397–404 is a binding site for ATP; the sequence is GDPSTSKS. The Arginine finger motif lies at 529 to 532; it reads SRFD.

This sequence belongs to the MCM family. As to quaternary structure, component of the mcm2-7 complex (RLF-M). The complex forms a toroidal hexameric ring with the proposed subunit order mcm2-mcm6-mcm4-mcm7-mcm3-mcm5. The heterodimer of mmcm3/mcm5 interacts with mcm4, mmcm6, mcm7 and weakly with mcm2. Component of the CMG helicase complex, composed of the mcm2-7 complex, the GINS complex and cdc45.

Its subcellular location is the nucleus. It is found in the chromosome. It carries out the reaction ATP + H2O = ADP + phosphate + H(+). In terms of biological role, acts as a component of the mcm2-7 complex (mcm complex) which is the putative replicative helicase essential for 'once per cell cycle' DNA replication initiation and elongation in eukaryotic cells. The active ATPase sites in the mcm2-7 ring are formed through the interaction surfaces of two neighboring subunits such that a critical structure of a conserved arginine finger motif is provided in trans relative to the ATP-binding site of the Walker A box of the adjacent subunit. The six ATPase active sites, however, are likely to contribute differentially to the complex helicase activity. The existence of maternal and zygotic forms of mcm3 and mcm6 suggests that specific forms of mcm2-7 complexes may be used during different stages of development. In Xenopus tropicalis (Western clawed frog), this protein is Maternal DNA replication licensing factor mcm6.